The chain runs to 117 residues: Large ribosomal subunit protein bL19 (117 aa).

It belongs to the bacterial ribosomal protein bL19 family.

Functionally, this protein is located at the 30S-50S ribosomal subunit interface and may play a role in the structure and function of the aminoacyl-tRNA binding site. In Thioalkalivibrio sulfidiphilus (strain HL-EbGR7), this protein is Large ribosomal subunit protein bL19.